We begin with the raw amino-acid sequence, 698 residues long: Polyribonucleotide nucleotidyltransferase (698 aa).

2 residues coordinate Mg(2+): aspartate 490 and aspartate 496. Residues 557-616 form the KH domain; it reads PKVVTMTIKPDKIRDVIGPGGKKINEIIDETGVKLDIEQDGTIFIGAVDQAMINRAREII. The region spanning 626 to 694 is the S1 motif domain; that stretch reads GQTYQATVKR…KQGRVNASHR (69 aa).

It belongs to the polyribonucleotide nucleotidyltransferase family. It depends on Mg(2+) as a cofactor.

The protein resides in the cytoplasm. It catalyses the reaction RNA(n+1) + phosphate = RNA(n) + a ribonucleoside 5'-diphosphate. Involved in mRNA degradation. Catalyzes the phosphorolysis of single-stranded polyribonucleotides processively in the 3'- to 5'-direction. This Staphylococcus aureus (strain MSSA476) protein is Polyribonucleotide nucleotidyltransferase.